A 505-amino-acid chain; its full sequence is MTDKHNKKYVVALDQGTTSSRAIVFDRDANVVSQAQREFAQFYPQAGWVEHDPMEIWATQSSTLVEALAQASIEHDQVAAIGITNQRETTVVWDRHSGRPIHNAIVWQCRRSAAICAQLKRDGLEDYIRETTGLVTDPYFSGTKLKWILDNVEGARERARNGDLLFGTIDTWLIWKLTEGKVHVTDYTNASRTMLFNIHSRDWDARMLEVLDIPRSMLPEVRNSSEVYGNARIGGVGGGELPIAGIAGDQQAALFGQMCVEPGQAKNTYGTGCFLLMHTGDKAVKSTHGLLTTIACGPRGEVGYALEGAVFNGGSTVQWLRDELKVINDSFDSEYFATKVKDSNGVYLVPAFTGLGAPYWDPYARGAVFGLTRGVKADHLIRATLESIAYQTRDVLDAMQRDAGERLRALRVDGGAVANNFLMQFQADILGTRVERPVMRETTALGAAYLAGLACGFWSSLDELKSKAVIERVFEPECDEPRREKLYAGWKKAVERTRGWDDGEL.

An ADP-binding site is contributed by Thr-17. ATP is bound by residues Thr-17, Thr-18, and Ser-19. Thr-17 contacts sn-glycerol 3-phosphate. Arg-21 contacts ADP. Residues Arg-87, Glu-88, Tyr-139, and Asp-249 each contribute to the sn-glycerol 3-phosphate site. Residues Arg-87, Glu-88, Tyr-139, Asp-249, and Gln-250 each coordinate glycerol. ADP is bound by residues Thr-271 and Gly-314. Positions 271, 314, 318, and 415 each coordinate ATP. ADP is bound by residues Gly-415 and Asn-419.

Belongs to the FGGY kinase family.

It carries out the reaction glycerol + ATP = sn-glycerol 3-phosphate + ADP + H(+). The protein operates within polyol metabolism; glycerol degradation via glycerol kinase pathway; sn-glycerol 3-phosphate from glycerol: step 1/1. Its activity is regulated as follows. Inhibited by fructose 1,6-bisphosphate (FBP). In terms of biological role, key enzyme in the regulation of glycerol uptake and metabolism. Catalyzes the phosphorylation of glycerol to yield sn-glycerol 3-phosphate. The sequence is that of Glycerol kinase 2 from Pseudomonas aeruginosa (strain ATCC 15692 / DSM 22644 / CIP 104116 / JCM 14847 / LMG 12228 / 1C / PRS 101 / PAO1).